Reading from the N-terminus, the 901-residue chain is HTH-type transcriptional regulator MalT (901 aa).

Position 39–46 (39–46) interacts with ATP; it reads SPAGYGKT. In terms of domain architecture, HTH luxR-type spans 829–894; the sequence is ELIRTSPLTQ…AAVQHAQKLL (66 aa). The segment at residues 853 to 872 is a DNA-binding region (H-T-H motif); sequence NEQIAGELEVAATTIKTHIR.

It belongs to the MalT family. Monomer in solution. Oligomerizes to an active state in the presence of the positive effectors ATP and maltotriose.

Activated by ATP and maltotriose, which are both required for DNA binding. Positively regulates the transcription of the maltose regulon whose gene products are responsible for uptake and catabolism of malto-oligosaccharides. Specifically binds to the promoter region of its target genes, recognizing a short DNA motif called the MalT box. This chain is HTH-type transcriptional regulator MalT, found in Escherichia coli O7:K1 (strain IAI39 / ExPEC).